The following is a 429-amino-acid chain: Glutamate-1-semialdehyde 2,1-aminomutase 2 (429 aa).

Lysine 267 carries the post-translational modification N6-(pyridoxal phosphate)lysine.

It belongs to the class-III pyridoxal-phosphate-dependent aminotransferase family. HemL subfamily. Homodimer. Requires pyridoxal 5'-phosphate as cofactor.

The protein resides in the cytoplasm. It carries out the reaction (S)-4-amino-5-oxopentanoate = 5-aminolevulinate. The protein operates within porphyrin-containing compound metabolism; protoporphyrin-IX biosynthesis; 5-aminolevulinate from L-glutamyl-tRNA(Glu): step 2/2. This Brevibacillus brevis (strain 47 / JCM 6285 / NBRC 100599) protein is Glutamate-1-semialdehyde 2,1-aminomutase 2.